An 87-amino-acid chain; its full sequence is MRTLTLIAIVTCAALVIFHAAAAEELEAQDVIQPEDIFTGVATLEEDRIFECSFSCDIKKNGKPCKGAGEKKCSGGWRCKMNFCVKF.

The first 23 residues, 1-23 (MRTLTLIAIVTCAALVIFHAAAA), serve as a signal peptide directing secretion. Residues 24 to 48 (EELEAQDVIQPEDIFTGVATLEEDR) constitute a propeptide that is removed on maturation. 3 cysteine pairs are disulfide-bonded: Cys-52/Cys-65, Cys-56/Cys-79, and Cys-73/Cys-84.

Belongs to the neurotoxin 12 (Hwtx-2) family. 03 (juruin) subfamily. In terms of tissue distribution, expressed by the venom gland.

Its subcellular location is the secreted. Functionally, probable ion channel inhibitor. The chain is U3-theraphotoxin-Cg1b from Chilobrachys guangxiensis (Chinese earth tiger tarantula).